The chain runs to 489 residues: Rhamnulokinase (489 aa).

Residue 13–17 (ASSGR) participates in ATP binding. The cysteines at positions 68 and 222 are disulfide-linked. Substrate-binding positions include G83 and 236-238 (HDT). D237 serves as the catalytic Proton acceptor. T259 is an ATP binding site. N296 lines the substrate pocket. Q304 contributes to the ATP binding site. A disulfide bond links C353 and C370. G402 contributes to the ATP binding site. C413 and C417 are joined by a disulfide.

This sequence belongs to the rhamnulokinase family. As to quaternary structure, monomer. Mg(2+) is required as a cofactor.

The enzyme catalyses L-rhamnulose + ATP = L-rhamnulose 1-phosphate + ADP + H(+). The protein operates within carbohydrate degradation; L-rhamnose degradation; glycerone phosphate from L-rhamnose: step 2/3. Its function is as follows. Involved in the catabolism of L-rhamnose (6-deoxy-L-mannose). Catalyzes the transfer of the gamma-phosphate group from ATP to the 1-hydroxyl group of L-rhamnulose to yield L-rhamnulose 1-phosphate. This Escherichia coli (strain K12 / DH10B) protein is Rhamnulokinase.